Reading from the N-terminus, the 53-residue chain is Small, acid-soluble spore protein K (53 aa).

The disordered stretch occupies residues 1–53 (MGRQAEFWSESKNNSKIDGQPKAKARFASKRPNGTINTHPQERMRAANQQEEE).

The protein belongs to the SspK family.

It localises to the spore core. The chain is Small, acid-soluble spore protein K from Bacillus cytotoxicus (strain DSM 22905 / CIP 110041 / 391-98 / NVH 391-98).